The sequence spans 476 residues: Cysteine--tRNA ligase (476 aa).

A Zn(2+)-binding site is contributed by Cys29. The 'HIGH' region signature appears at 31–41 (PTVYDYPHLGH). Zn(2+) is bound by residues Cys209, His234, and Glu238. Residues 266–270 (KMSKS) carry the 'KMSKS' region motif. Lys269 provides a ligand contact to ATP.

Belongs to the class-I aminoacyl-tRNA synthetase family. It depends on Zn(2+) as a cofactor.

It localises to the cytoplasm. It carries out the reaction tRNA(Cys) + L-cysteine + ATP = L-cysteinyl-tRNA(Cys) + AMP + diphosphate. This is Cysteine--tRNA ligase (cysS) from Pyrococcus horikoshii (strain ATCC 700860 / DSM 12428 / JCM 9974 / NBRC 100139 / OT-3).